Consider the following 426-residue polypeptide: Dynein regulatory complex protein 10 (426 aa).

Disordered stretches follow at residues 18 to 37 (TRIG…LKPL) and 399 to 426 (SKKK…KGKK). The 30-residue stretch at 377-406 (MVRAATLIQAFWKGYLVRSLLRSKKKRGKG) folds into the IQ domain. The span at 399–408 (SKKKRGKGKA) shows a compositional bias: basic residues. Residues 409-426 (KGKEKGKQKGKEKGKGKK) show a composition bias toward basic and acidic residues.

It belongs to the DRC10 family. As to quaternary structure, component of the nexin-dynein regulatory complex (N-DRC). Interacts with CFAP52.

It localises to the cytoplasm. It is found in the cytoskeleton. Its subcellular location is the flagellum axoneme. Component of the nexin-dynein regulatory complex (N-DRC), a key regulator of ciliary/flagellar motility which maintains the alignment and integrity of the distal axoneme and regulates microtubule sliding in motile axonemes. In Macaca fascicularis (Crab-eating macaque), this protein is Dynein regulatory complex protein 10 (IQCD).